The primary structure comprises 241 residues: MSQWSLSQLLSSLHEDIQQRLSVVRKTFGHPGTKGDASENVWIDMLDTYLPKRYQAAKAHVVDSLGNFSQQIDVVVFDRQYSPFIFTYENETIIPAESVYAVFEAKQTADAGLVAYAQEKVASVRRLHRTSLPIPHAGGTYPAKPLIPILGGLLTFESEWSPALGPSMDKALNANLTEGRLDIGCVAAHGHFFYDQASGAYSYTNENKPATAFLFKLIAQLQFSGTVPMIDVEAYGQWLTK.

Catalysis depends on residues D73, E104, and K106. 2 residues coordinate Mg(2+): D73 and E104.

Belongs to the NucC endonuclease family. Self-oligomerizes. Forms homotrimers; in the presence of cAAA the trimers associate face-to-face to form homohexamers. The 2 cAAA-binding sites are on the exterior of the hexamer at the three-way junction, there are maximally 2 cyclic nucleotides per hexamer. Mg(2+) serves as cofactor.

Activated by cAAA and to a lesser extent cAA; both cyclic nucleotides are products of its cognate CD-NTase. Cyclic nucleotide binding causes hexamerization. Effector DNase of a CBASS antivirus system. CBASS (cyclic oligonucleotide-based antiphage signaling system) provides immunity against bacteriophage. The CD-NTase protein synthesizes cyclic nucleotides in response to infection; these serve as specific second messenger signals. The signals activate a diverse range of effectors, leading to bacterial cell death and thus abortive phage infection. A type III-C(AAA) CBASS system. Its function is as follows. A cyclic nucleotide-activated dsDNase. In the presence of 3',3',3'-cyclic AMP-AMP-AMP (cAAA) and to a lesser extent cyclic-di-AMP (c-di-AMP), endonucleolytically degrades dsDNA. Binds one cAAA in a pocket on one surface of the trimer; cAAA binding promotes hexamerization which is probably necessary for nuclease activation. The nuclease digests dsDNA to about 50 bp lengths. DNA has been modeled to contact a pair of juxtaposed active sites (one from each layer of the hexamer), accounting for cleavage on both strands. The polypeptide is Endodeoxyribonuclease NucC (Pseudomonas aeruginosa).